The primary structure comprises 515 residues: Bifunctional purine biosynthesis protein PurH (515 aa).

One can recognise an MGS-like domain in the interval 1-145; it reads MTKRALISVS…KNHASVTVVV (145 aa).

This sequence belongs to the PurH family.

It carries out the reaction (6R)-10-formyltetrahydrofolate + 5-amino-1-(5-phospho-beta-D-ribosyl)imidazole-4-carboxamide = 5-formamido-1-(5-phospho-D-ribosyl)imidazole-4-carboxamide + (6S)-5,6,7,8-tetrahydrofolate. It catalyses the reaction IMP + H2O = 5-formamido-1-(5-phospho-D-ribosyl)imidazole-4-carboxamide. It functions in the pathway purine metabolism; IMP biosynthesis via de novo pathway; 5-formamido-1-(5-phospho-D-ribosyl)imidazole-4-carboxamide from 5-amino-1-(5-phospho-D-ribosyl)imidazole-4-carboxamide (10-formyl THF route): step 1/1. The protein operates within purine metabolism; IMP biosynthesis via de novo pathway; IMP from 5-formamido-1-(5-phospho-D-ribosyl)imidazole-4-carboxamide: step 1/1. This chain is Bifunctional purine biosynthesis protein PurH, found in Streptococcus pyogenes serotype M2 (strain MGAS10270).